We begin with the raw amino-acid sequence, 258 residues long: DNA repair protein RecO (258 aa).

The protein belongs to the RecO family.

Involved in DNA repair and RecF pathway recombination. This chain is DNA repair protein RecO, found in Oceanobacillus iheyensis (strain DSM 14371 / CIP 107618 / JCM 11309 / KCTC 3954 / HTE831).